A 198-amino-acid chain; its full sequence is Ribonuclease HII (198 aa).

One can recognise an RNase H type-2 domain in the interval 10-198; sequence HLVAGVDEVG…PVKRALELAS (189 aa). A divalent metal cation contacts are provided by aspartate 16, glutamate 17, and aspartate 108.

This sequence belongs to the RNase HII family. The cofactor is Mn(2+). Requires Mg(2+) as cofactor.

It localises to the cytoplasm. The enzyme catalyses Endonucleolytic cleavage to 5'-phosphomonoester.. Functionally, endonuclease that specifically degrades the RNA of RNA-DNA hybrids. This is Ribonuclease HII from Salmonella arizonae (strain ATCC BAA-731 / CDC346-86 / RSK2980).